Reading from the N-terminus, the 380-residue chain is Tryptophan 2,3-dioxygenase (380 aa).

Residues 57–61 and Arg-128 contribute to the substrate site; that span reads FIITH. Residue His-313 participates in heme binding. Substrate is bound at residue Thr-328.

It belongs to the tryptophan 2,3-dioxygenase family. As to quaternary structure, homotetramer. Dimer of dimers. Heme serves as cofactor.

The enzyme catalyses L-tryptophan + O2 = N-formyl-L-kynurenine. Its pathway is amino-acid degradation; L-tryptophan degradation via kynurenine pathway; L-kynurenine from L-tryptophan: step 1/2. It participates in pigment biosynthesis; ommochrome biosynthesis. In terms of biological role, heme-dependent dioxygenase that catalyzes the oxidative cleavage of the L-tryptophan (L-Trp) pyrrole ring and converts L-tryptophan to N-formyl-L-kynurenine. Catalyzes the oxidative cleavage of the indole moiety. This is Tryptophan 2,3-dioxygenase from Drosophila ananassae (Fruit fly).